The primary structure comprises 572 residues: Potassium-transporting ATPase potassium-binding subunit (572 aa).

11 helical membrane passes run 5–25 (LAAGLQIGFVILALAIAYVPL), 71–91 (VGYTLSLLGFSFASVIFLYVL), 97–117 (VLPLSGGLGAVSPAVAFNTAV), 142–162 (GLAVQNFVSAAVGLTVAVALI), 188–208 (ILLPLSFAVALILLSQGTIQS), 258–278 (PTPLSNVIEILAILIIPVCLT), 292–312 (LTVLSVMGTLFGGMLALVTWA), 387–407 (GLYGILVLAIIAVFVGGLLVG), 422–442 (ITMAALSVLVMPALVLVGTGI), 500–520 (LGMAMLLGRFLPIIFTLALAG), and 548–568 (GTVLLVAALTFFPALALGPIA).

It belongs to the KdpA family. The system is composed of three essential subunits: KdpA, KdpB and KdpC.

It is found in the cell membrane. Functionally, part of the high-affinity ATP-driven potassium transport (or Kdp) system, which catalyzes the hydrolysis of ATP coupled with the electrogenic transport of potassium into the cytoplasm. This subunit binds the extracellular potassium ions and delivers the ions to the membrane domain of KdpB through an intramembrane tunnel. This Mycobacteroides abscessus (strain ATCC 19977 / DSM 44196 / CCUG 20993 / CIP 104536 / JCM 13569 / NCTC 13031 / TMC 1543 / L948) (Mycobacterium abscessus) protein is Potassium-transporting ATPase potassium-binding subunit.